Reading from the N-terminus, the 292-residue chain is Acetyl-coenzyme A carboxylase carboxyl transferase subunit beta (292 aa).

The CoA carboxyltransferase N-terminal domain occupies L29–N292. C33, C36, C52, and C55 together coordinate Zn(2+). The C4-type zinc-finger motif lies at C33–C55.

This sequence belongs to the AccD/PCCB family. Acetyl-CoA carboxylase is a heterohexamer composed of biotin carboxyl carrier protein (AccB), biotin carboxylase (AccC) and two subunits each of ACCase subunit alpha (AccA) and ACCase subunit beta (AccD). Zn(2+) is required as a cofactor.

It localises to the cytoplasm. It catalyses the reaction N(6)-carboxybiotinyl-L-lysyl-[protein] + acetyl-CoA = N(6)-biotinyl-L-lysyl-[protein] + malonyl-CoA. Its pathway is lipid metabolism; malonyl-CoA biosynthesis; malonyl-CoA from acetyl-CoA: step 1/1. In terms of biological role, component of the acetyl coenzyme A carboxylase (ACC) complex. Biotin carboxylase (BC) catalyzes the carboxylation of biotin on its carrier protein (BCCP) and then the CO(2) group is transferred by the transcarboxylase to acetyl-CoA to form malonyl-CoA. This Prochlorococcus marinus subsp. pastoris (strain CCMP1986 / NIES-2087 / MED4) protein is Acetyl-coenzyme A carboxylase carboxyl transferase subunit beta.